The chain runs to 234 residues: Purine nucleoside phosphorylase DeoD-type (234 aa).

H4 is an a purine D-ribonucleoside binding site. Residues G20, R24, R43, and 87–90 (RIGT) each bind phosphate. Residues 179 to 181 (EME) and 203 to 204 (SD) contribute to the a purine D-ribonucleoside site. Residue D204 is the Proton donor of the active site.

It belongs to the PNP/UDP phosphorylase family. Homohexamer; trimer of homodimers.

It catalyses the reaction a purine D-ribonucleoside + phosphate = a purine nucleobase + alpha-D-ribose 1-phosphate. It carries out the reaction a purine 2'-deoxy-D-ribonucleoside + phosphate = a purine nucleobase + 2-deoxy-alpha-D-ribose 1-phosphate. Catalyzes the reversible phosphorolytic breakdown of the N-glycosidic bond in the beta-(deoxy)ribonucleoside molecules, with the formation of the corresponding free purine bases and pentose-1-phosphate. This is Purine nucleoside phosphorylase DeoD-type from Helicobacter pylori (strain Shi470).